Consider the following 536-residue polypeptide: CTP synthase (536 aa).

Positions 1–267 (MSKFVFVTGG…CKETLKYLEL (267 aa)) are amidoligase domain. S13 contributes to the CTP binding site. S13 lines the UTP pocket. ATP contacts are provided by residues 14–19 (SIGKGI) and D71. Mg(2+)-binding residues include D71 and E141. Residues 148–150 (DIE), 188–193 (KTKPTQ), and K224 contribute to the CTP site. Residues 188 to 193 (KTKPTQ) and K224 contribute to the UTP site. A Glutamine amidotransferase type-1 domain is found at 292 to 534 (KVALVGKYIE…IKASQEKLTQ (243 aa)). G354 contacts L-glutamine. The Nucleophile; for glutamine hydrolysis role is filled by C381. Residues 382-385 (LGMQ), E405, and R462 each bind L-glutamine. Catalysis depends on residues H507 and E509.

The protein belongs to the CTP synthase family. In terms of assembly, homotetramer.

The enzyme catalyses UTP + L-glutamine + ATP + H2O = CTP + L-glutamate + ADP + phosphate + 2 H(+). It carries out the reaction L-glutamine + H2O = L-glutamate + NH4(+). The catalysed reaction is UTP + NH4(+) + ATP = CTP + ADP + phosphate + 2 H(+). It functions in the pathway pyrimidine metabolism; CTP biosynthesis via de novo pathway; CTP from UDP: step 2/2. Its activity is regulated as follows. Allosterically activated by GTP, when glutamine is the substrate; GTP has no effect on the reaction when ammonia is the substrate. The allosteric effector GTP functions by stabilizing the protein conformation that binds the tetrahedral intermediate(s) formed during glutamine hydrolysis. Inhibited by the product CTP, via allosteric rather than competitive inhibition. In terms of biological role, catalyzes the ATP-dependent amination of UTP to CTP with either L-glutamine or ammonia as the source of nitrogen. Regulates intracellular CTP levels through interactions with the four ribonucleotide triphosphates. This chain is CTP synthase, found in Prochlorococcus marinus (strain MIT 9215).